The chain runs to 122 residues: UPF0145 protein Bmul_3577/BMULJ_04940 (122 aa).

The protein belongs to the UPF0145 family.

In Burkholderia multivorans (strain ATCC 17616 / 249), this protein is UPF0145 protein Bmul_3577/BMULJ_04940.